We begin with the raw amino-acid sequence, 284 residues long: RNA polymerase sigma factor RpoH (284 aa).

Residues 53–122 are sigma-70 factor domain-2; that stretch reads LILSHLRFVV…IHEYVLRNWR (70 aa). An Interaction with polymerase core subunit RpoC motif is present at residues 77–80; sequence DLIQ. A sigma-70 factor domain-4 region spans residues 228–280; sequence AMQGLDERSQDIIRARWLDEDNKSTLQELADRYGVSAERVRQLEKNAMKKLRA. The H-T-H motif DNA-binding region spans 253 to 272; the sequence is LQELADRYGVSAERVRQLEK.

Belongs to the sigma-70 factor family. RpoH subfamily. As to quaternary structure, interacts with the RNA polymerase core enzyme.

It localises to the cytoplasm. Functionally, sigma factors are initiation factors that promote the attachment of RNA polymerase to specific initiation sites and are then released. This sigma factor is involved in regulation of expression of heat shock genes. This Escherichia coli O6:H1 (strain CFT073 / ATCC 700928 / UPEC) protein is RNA polymerase sigma factor RpoH.